A 528-amino-acid chain; its full sequence is Beta-galactoside alpha-2,6-sialyltransferase 2 (528 aa).

The Cytoplasmic segment spans residues 1-10 (MKPNLKQWKQ). A helical; Signal-anchor for type II membrane protein transmembrane segment spans residues 11 to 31 (LMLFGIFAWGLLFLVIFIYFT). Residues 32–528 (DSNSAEPVPS…CPERNNFPPL (497 aa)) are Lumenal-facing. N167, N308, and N338 each carry an N-linked (GlcNAc...) asparagine glycan. Cystine bridges form between C254–C519, C297–C448, and C466–C477.

This sequence belongs to the glycosyltransferase 29 family.

It localises to the golgi apparatus. The protein resides in the golgi stack membrane. The catalysed reaction is a beta-D-galactoside + CMP-N-acetyl-beta-neuraminate = an N-acetyl-alpha-neuraminyl-(2-&gt;6)-beta-D-galactosyl derivative + CMP + H(+). Functionally, transfers sialic acid from the donor of substrate CMP-sialic acid to galactose containing acceptor substrates. This is Beta-galactoside alpha-2,6-sialyltransferase 2 (ST6GAL2) from Gallus gallus (Chicken).